Here is a 328-residue protein sequence, read N- to C-terminus: Probable cell division protein WhiA (328 aa).

A DNA-binding region (H-T-H motif) is located at residues 276-309 (SLEELGRLADPQMTKDAVAGRIRRLLHMADKKAS).

The protein belongs to the WhiA family.

Its function is as follows. Involved in cell division and chromosome segregation. The protein is Probable cell division protein WhiA of Corynebacterium diphtheriae (strain ATCC 700971 / NCTC 13129 / Biotype gravis).